A 339-amino-acid chain; its full sequence is Uroporphyrinogen decarboxylase (339 aa).

Substrate contacts are provided by residues 23-27 (RQAGR), aspartate 72, tyrosine 147, serine 202, and histidine 315.

Belongs to the uroporphyrinogen decarboxylase family. In terms of assembly, homodimer.

It is found in the cytoplasm. The catalysed reaction is uroporphyrinogen III + 4 H(+) = coproporphyrinogen III + 4 CO2. It participates in porphyrin-containing compound metabolism; protoporphyrin-IX biosynthesis; coproporphyrinogen-III from 5-aminolevulinate: step 4/4. Functionally, catalyzes the decarboxylation of four acetate groups of uroporphyrinogen-III to yield coproporphyrinogen-III. The polypeptide is Uroporphyrinogen decarboxylase (Desulfotalea psychrophila (strain LSv54 / DSM 12343)).